We begin with the raw amino-acid sequence, 106 residues long: MKVLVVVALLVTLISYSSSEGIDDLEADELLSLMANEQTRKECIPKHHECTSNKHGCCRGNFFKYKCQCTTVVTQDGEQTERCFCGTPPHHKAAELVVGFGKKIFG.

Residues 1–19 form the signal peptide; that stretch reads MKVLVVVALLVTLISYSSS. Positions 20–40 are excised as a propeptide; it reads EGIDDLEADELLSLMANEQTR. Intrachain disulfides connect C43–C58, C50–C67, C57–C85, and C69–C83.

It belongs to the neurotoxin 19 (CSTX) family. 04 (U1-Lctx) subfamily. As to expression, expressed by the venom gland.

The protein localises to the secreted. The polypeptide is U1-lycotoxin-Ls1b (Lycosa singoriensis (Wolf spider)).